The following is a 328-amino-acid chain: MIEKIWSGESPLWRLLLPLSWLYGLVSGAIRLCYKLKLKRAWRAPVPVVVVGNLTAGGNGKTPVVVWLVEQLQQRGIRVGVVSRGYGGKAESYPLLLSADTTTAQAGDEPVLIYQRTDAPVAVSPVRSDAVKAILAQHPDVQIIVTDDGLQHYCLARDVEIVVIDGVRRFGNGWWLPAGPMRERAGRLKSIDAVIVNGGVPRSGEIPMHLLPGQAVNLRTGTRCDVAQLEHVVAMAGIGHPPRFFATLKMCGVQPEKCVPLADHQSLNHADVSALVSTGQTLVMTEKDAVKCWAFAEENWWYLPVDAQLSGDEPAKLLAQLTSLASGN.

Residue 55-62 (TAGGNGKT) participates in ATP binding.

It belongs to the LpxK family.

The catalysed reaction is a lipid A disaccharide + ATP = a lipid IVA + ADP + H(+). Its pathway is glycolipid biosynthesis; lipid IV(A) biosynthesis; lipid IV(A) from (3R)-3-hydroxytetradecanoyl-[acyl-carrier-protein] and UDP-N-acetyl-alpha-D-glucosamine: step 6/6. Transfers the gamma-phosphate of ATP to the 4'-position of a tetraacyldisaccharide 1-phosphate intermediate (termed DS-1-P) to form tetraacyldisaccharide 1,4'-bis-phosphate (lipid IVA). The polypeptide is Tetraacyldisaccharide 4'-kinase (Shigella dysenteriae serotype 1 (strain Sd197)).